We begin with the raw amino-acid sequence, 314 residues long: Aspartate carbamoyltransferase catalytic subunit (314 aa).

The carbamoyl phosphate site is built by arginine 55 and threonine 56. Residue lysine 83 participates in L-aspartate binding. Positions 105, 139, and 142 each coordinate carbamoyl phosphate. L-aspartate is bound by residues arginine 172 and arginine 226. Carbamoyl phosphate-binding residues include glycine 267 and proline 268.

Belongs to the aspartate/ornithine carbamoyltransferase superfamily. ATCase family. Heterododecamer (2C3:3R2) of six catalytic PyrB chains organized as two trimers (C3), and six regulatory PyrI chains organized as three dimers (R2).

It catalyses the reaction carbamoyl phosphate + L-aspartate = N-carbamoyl-L-aspartate + phosphate + H(+). The protein operates within pyrimidine metabolism; UMP biosynthesis via de novo pathway; (S)-dihydroorotate from bicarbonate: step 2/3. In terms of biological role, catalyzes the condensation of carbamoyl phosphate and aspartate to form carbamoyl aspartate and inorganic phosphate, the committed step in the de novo pyrimidine nucleotide biosynthesis pathway. In Rhodococcus jostii (strain RHA1), this protein is Aspartate carbamoyltransferase catalytic subunit.